The sequence spans 101 residues: NAD(P)H-quinone oxidoreductase subunit 4L, chloroplastic (101 aa).

Helical transmembrane passes span 2–22, 32–52, and 61–81; these read MLEY…YGLI, MCLE…SYFF, and IFSI…LAIV.

This sequence belongs to the complex I subunit 4L family. As to quaternary structure, NDH is composed of at least 16 different subunits, 5 of which are encoded in the nucleus.

Its subcellular location is the plastid. It is found in the chloroplast thylakoid membrane. It carries out the reaction a plastoquinone + NADH + (n+1) H(+)(in) = a plastoquinol + NAD(+) + n H(+)(out). It catalyses the reaction a plastoquinone + NADPH + (n+1) H(+)(in) = a plastoquinol + NADP(+) + n H(+)(out). Its function is as follows. NDH shuttles electrons from NAD(P)H:plastoquinone, via FMN and iron-sulfur (Fe-S) centers, to quinones in the photosynthetic chain and possibly in a chloroplast respiratory chain. The immediate electron acceptor for the enzyme in this species is believed to be plastoquinone. Couples the redox reaction to proton translocation, and thus conserves the redox energy in a proton gradient. The chain is NAD(P)H-quinone oxidoreductase subunit 4L, chloroplastic from Ipomoea purpurea (Common morning glory).